The sequence spans 307 residues: Thioredoxin reductase (307 aa).

36 to 43 (DNAAPGGK) is a binding site for FAD. Residues Cys-138 and Cys-141 are joined by a disulfide bond. 278 to 287 (DIRIKDIRQI) is an FAD binding site.

It belongs to the class-II pyridine nucleotide-disulfide oxidoreductase family. Homodimer. Requires FAD as cofactor.

The protein resides in the cytoplasm. The catalysed reaction is [thioredoxin]-dithiol + NADP(+) = [thioredoxin]-disulfide + NADPH + H(+). The polypeptide is Thioredoxin reductase (trxB) (Mycoplasmopsis pulmonis (strain UAB CTIP) (Mycoplasma pulmonis)).